Here is a 166-residue protein sequence, read N- to C-terminus: Large ribosomal subunit protein uL10 (166 aa).

Belongs to the universal ribosomal protein uL10 family. In terms of assembly, part of the ribosomal stalk of the 50S ribosomal subunit. The N-terminus interacts with L11 and the large rRNA to form the base of the stalk. The C-terminus forms an elongated spine to which L12 dimers bind in a sequential fashion forming a multimeric L10(L12)X complex.

Functionally, forms part of the ribosomal stalk, playing a central role in the interaction of the ribosome with GTP-bound translation factors. This is Large ribosomal subunit protein uL10 from Streptococcus gordonii (strain Challis / ATCC 35105 / BCRC 15272 / CH1 / DL1 / V288).